A 172-amino-acid polypeptide reads, in one-letter code: Nicotinamide-nucleotide adenylyltransferase (172 aa).

It belongs to the archaeal NMN adenylyltransferase family.

It localises to the cytoplasm. The catalysed reaction is beta-nicotinamide D-ribonucleotide + ATP + H(+) = diphosphate + NAD(+). It participates in cofactor biosynthesis; NAD(+) biosynthesis; NAD(+) from nicotinamide D-ribonucleotide: step 1/1. In Aeropyrum pernix (strain ATCC 700893 / DSM 11879 / JCM 9820 / NBRC 100138 / K1), this protein is Nicotinamide-nucleotide adenylyltransferase.